Consider the following 463-residue polypeptide: Fumarate hydratase class II (463 aa).

Residues 97 to 99, R125, 128 to 131, 138 to 140, and T186 each bind substrate; these read SGT, HPND, and SSN. Over residues 121 to 134 the composition is skewed to basic and acidic residues; it reads RGEGRKVHPNDHVN. The disordered stretch occupies residues 121-142; sequence RGEGRKVHPNDHVNRGQSSNDT. The active-site Proton donor/acceptor is the H187. The active site involves S317. Residues S318 and 323-325 each bind substrate; that span reads KVN.

The protein belongs to the class-II fumarase/aspartase family. Fumarase subfamily. As to quaternary structure, homotetramer.

It localises to the cytoplasm. It carries out the reaction (S)-malate = fumarate + H2O. The protein operates within carbohydrate metabolism; tricarboxylic acid cycle; (S)-malate from fumarate: step 1/1. In terms of biological role, involved in the TCA cycle. Catalyzes the stereospecific interconversion of fumarate to L-malate. This chain is Fumarate hydratase class II, found in Bordetella bronchiseptica (strain ATCC BAA-588 / NCTC 13252 / RB50) (Alcaligenes bronchisepticus).